The primary structure comprises 511 residues: MSVELWQQCVELLRDELPAQQFNTWIRPLQVEAEGDELRVYAPNRFVLDWVNEKYLGRLLELLGENGSGIAPALSLLIGSRRSSAPRAAPNAPVSAAMAASLAQTHAQPAAAPVMAVADPVSVPTAEPAQASDMAEASSRDSYDSMADSAPAPVAPGRTEQRNVQVEGALKHTSYLNRTFTFETFVEGKSNQLARAAAWQVADNPKHGYNPLFLYGGVGLGKTHLMHAVGNHLLKKNPNAKVVYLHSERFVADMVKALQLNAINEFKRFYRSVDALLIDDIQFFARKERSQEEFFHTFNALLEGGQQVILTSDRYPKEIEGLEERLKSRFGWGLTVAVEPPELETRVAILMKKADQAKVELPHDAAFFIAQRIRSNVRELEGALKRVIAHSHFMGRDITIELIRESLKDLLALQDKLVSVDNIQRTVAEYYKIKISDLLSKRRSRSVARPRQVAMALSKELTNHSLPEIGDMFGGRDHTTVLHACRKINELKESDADIREDYKNLLRTLTT.

Residues 1–90 (MSVELWQQCV…RRSSAPRAAP (90 aa)) are domain I, interacts with DnaA modulators. A domain II region spans residues 91–174 (NAPVSAAMAA…QVEGALKHTS (84 aa)). The segment at 125-161 (TAEPAQASDMAEASSRDSYDSMADSAPAPVAPGRTEQ) is disordered. Residues 175–391 (YLNRTFTFET…GALKRVIAHS (217 aa)) form a domain III, AAA+ region region. ATP-binding residues include G219, G221, K222, and T223. The tract at residues 392-511 (HFMGRDITIE…YKNLLRTLTT (120 aa)) is domain IV, binds dsDNA.

This sequence belongs to the DnaA family. Oligomerizes as a right-handed, spiral filament on DNA at oriC.

The protein resides in the cytoplasm. Plays an essential role in the initiation and regulation of chromosomal replication. ATP-DnaA binds to the origin of replication (oriC) to initiate formation of the DNA replication initiation complex once per cell cycle. Binds the DnaA box (a 9 base pair repeat at the origin) and separates the double-stranded (ds)DNA. Forms a right-handed helical filament on oriC DNA; dsDNA binds to the exterior of the filament while single-stranded (ss)DNA is stabiized in the filament's interior. The ATP-DnaA-oriC complex binds and stabilizes one strand of the AT-rich DNA unwinding element (DUE), permitting loading of DNA polymerase. After initiation quickly degrades to an ADP-DnaA complex that is not apt for DNA replication. Binds acidic phospholipids. In Pseudomonas putida (strain W619), this protein is Chromosomal replication initiator protein DnaA.